Consider the following 239-residue polypeptide: Octanoyltransferase (239 aa).

The region spanning 59–239 is the BPL/LPL catalytic domain; that stretch reads PFSPQAVWLL…KRRFKLNWEK (181 aa). Residues 101–108, 168–170, and 181–183 contribute to the substrate site; these read RGGEVTHH, SIG, and GFS. Cys-199 serves as the catalytic Acyl-thioester intermediate.

Belongs to the LipB family.

Its subcellular location is the cytoplasm. It catalyses the reaction octanoyl-[ACP] + L-lysyl-[protein] = N(6)-octanoyl-L-lysyl-[protein] + holo-[ACP] + H(+). It participates in protein modification; protein lipoylation via endogenous pathway; protein N(6)-(lipoyl)lysine from octanoyl-[acyl-carrier-protein]: step 1/2. In terms of biological role, catalyzes the transfer of endogenously produced octanoic acid from octanoyl-acyl-carrier-protein onto the lipoyl domains of lipoate-dependent enzymes. Lipoyl-ACP can also act as a substrate although octanoyl-ACP is likely to be the physiological substrate. The sequence is that of Octanoyltransferase from Prochlorococcus marinus (strain NATL2A).